Reading from the N-terminus, the 273-residue chain is Ribosomal RNA small subunit methyltransferase A (273 aa).

Residues N18, L20, G45, E66, D91, and N113 each contribute to the S-adenosyl-L-methionine site.

Belongs to the class I-like SAM-binding methyltransferase superfamily. rRNA adenine N(6)-methyltransferase family. RsmA subfamily.

It localises to the cytoplasm. The catalysed reaction is adenosine(1518)/adenosine(1519) in 16S rRNA + 4 S-adenosyl-L-methionine = N(6)-dimethyladenosine(1518)/N(6)-dimethyladenosine(1519) in 16S rRNA + 4 S-adenosyl-L-homocysteine + 4 H(+). Specifically dimethylates two adjacent adenosines (A1518 and A1519) in the loop of a conserved hairpin near the 3'-end of 16S rRNA in the 30S particle. May play a critical role in biogenesis of 30S subunits. The sequence is that of Ribosomal RNA small subunit methyltransferase A from Escherichia coli O157:H7.